Here is an 87-residue protein sequence, read N- to C-terminus: Small ribosomal subunit protein bS20 (87 aa).

This sequence belongs to the bacterial ribosomal protein bS20 family.

Functionally, binds directly to 16S ribosomal RNA. This Brachyspira hyodysenteriae (strain ATCC 49526 / WA1) protein is Small ribosomal subunit protein bS20.